The sequence spans 331 residues: dTDP-glucose 4,6-dehydratase (331 aa).

NAD(+)-binding positions include 11-12 (FI), 33-36 (DALT), 57-58 (DI), 77-81 (FAAES), and threonine 96. Serine 81 contacts substrate. Threonine 120 is a substrate binding site. Aspartate 121 functions as the Proton donor in the catalytic mechanism. Residues glutamate 122 and tyrosine 147 each act as proton acceptor in the active site. 147 to 151 (YSATK) is an NAD(+) binding site. Asparagine 176 lines the substrate pocket. Asparagine 177 contacts NAD(+). Residues 186–191 (KFIPRQ), 202–204 (KLY), arginine 211, asparagine 246, and 269–273 (DRVGH) each bind substrate.

Belongs to the NAD(P)-dependent epimerase/dehydratase family. dTDP-glucose dehydratase subfamily. In terms of assembly, homodimer. The cofactor is NAD(+).

The catalysed reaction is dTDP-alpha-D-glucose = dTDP-4-dehydro-6-deoxy-alpha-D-glucose + H2O. It functions in the pathway carbohydrate biosynthesis; dTDP-L-rhamnose biosynthesis. Its function is as follows. Catalyzes the dehydration of dTDP-D-glucose to form dTDP-6-deoxy-D-xylo-4-hexulose via a three-step process involving oxidation, dehydration and reduction. Involved in the biosynthesis of the dTDP-L-rhamnose which is a component of the critical linker, D-N-acetylglucosamine-L-rhamnose disaccharide, which connects the galactan region of arabinogalactan to peptidoglycan via a phosphodiester linkage. The polypeptide is dTDP-glucose 4,6-dehydratase (rmlB) (Mycobacterium tuberculosis (strain CDC 1551 / Oshkosh)).